Here is a 437-residue protein sequence, read N- to C-terminus: Type II methyltransferase M.HgiCII (437 aa).

The SAM-dependent MTase C5-type domain occupies 4-431 (FRFIDLFAGI…KALPNDHLFE (428 aa)). Cys75 is a catalytic residue.

It belongs to the class I-like SAM-binding methyltransferase superfamily. C5-methyltransferase family.

It catalyses the reaction a 2'-deoxycytidine in DNA + S-adenosyl-L-methionine = a 5-methyl-2'-deoxycytidine in DNA + S-adenosyl-L-homocysteine + H(+). Functionally, a methylase that recognizes the double-stranded sequence 5'-GGWCC-3', methylates C-? on both strands and protects the DNA from cleavage by the HgiCII endonuclease. This chain is Type II methyltransferase M.HgiCII, found in Herpetosiphon aurantiacus (Herpetosiphon giganteus).